Reading from the N-terminus, the 39-residue chain is Photosystem II reaction center protein L (39 aa).

Residues 18-38 form a helical membrane-spanning segment; the sequence is SLYWGLLLIFVLAVLFSNYFF.

Belongs to the PsbL family. As to quaternary structure, PSII is composed of 1 copy each of membrane proteins PsbA, PsbB, PsbC, PsbD, PsbE, PsbF, PsbH, PsbI, PsbJ, PsbK, PsbL, PsbM, PsbT, PsbX, PsbY, PsbZ, Psb30/Ycf12, at least 3 peripheral proteins of the oxygen-evolving complex and a large number of cofactors. It forms dimeric complexes.

The protein resides in the plastid thylakoid membrane. One of the components of the core complex of photosystem II (PSII). PSII is a light-driven water:plastoquinone oxidoreductase that uses light energy to abstract electrons from H(2)O, generating O(2) and a proton gradient subsequently used for ATP formation. It consists of a core antenna complex that captures photons, and an electron transfer chain that converts photonic excitation into a charge separation. This subunit is found at the monomer-monomer interface and is required for correct PSII assembly and/or dimerization. This Cuscuta gronovii (Common dodder) protein is Photosystem II reaction center protein L.